Here is a 212-residue protein sequence, read N- to C-terminus: F420-dependent NADP reductase (212 aa).

NADP(+) contacts are provided by residues 9-12 (TGNL), 31-32 (SR), K36, I72, H76, V98, and A137. L207 is a binding site for coenzyme F420-(gamma-Glu)n.

Belongs to the F420-dependent NADP reductase family. Homodimer.

It catalyses the reaction reduced coenzyme F420-(gamma-L-Glu)(n) + NADP(+) = oxidized coenzyme F420-(gamma-L-Glu)(n) + NADPH + 2 H(+). In terms of biological role, catalyzes the reversible reduction of NADP(+) by F420H(2). In this reaction the proS hydrogen at C5 of F420 is transferred into the proS position at C4 of NADPH. The chain is F420-dependent NADP reductase (fno) from Archaeoglobus fulgidus (strain ATCC 49558 / DSM 4304 / JCM 9628 / NBRC 100126 / VC-16).